Reading from the N-terminus, the 32-residue chain is Chlorophyll a-b binding protein 2, chloroplastic (32 aa).

Chlorophyll a is bound by residues glutamate 19 and histidine 22. Arginine 24 lines the chlorophyll b pocket.

This sequence belongs to the light-harvesting chlorophyll a/b-binding (LHC) protein family. As to quaternary structure, the LHC complex consists of chlorophyll a-b binding proteins. Requires Binds at least 14 chlorophylls (8 Chl-a and 6 Chl-b) and carotenoids such as lutein and neoxanthin. as cofactor. Post-translationally, photoregulated by reversible phosphorylation of its threonine residues.

It is found in the plastid. The protein resides in the chloroplast thylakoid membrane. Its function is as follows. The light-harvesting complex (LHC) functions as a light receptor, it captures and delivers excitation energy to photosystems with which it is closely associated. The protein is Chlorophyll a-b binding protein 2, chloroplastic of Populus euphratica (Euphrates poplar).